The primary structure comprises 325 residues: MAGKGLKSLNEAMNALSIASKSCRALPMRQSSILPCRRSMASVATPPAANITRSVSEPWQPITNVPVTVYSFPELEPRSLESYSARHLHLPLRRDILHLAVIYEGDSTRRGMASTKTRYEVHGSHKKMSPQKGTGNARRGTRQSPLMKGGGKTFGPKPRDFSTKLNKKVYDLAWRTALSYRYKRGELIVTEDGLDLPLPNDFLWLAGGGKLSRELEDGYVRKWVHEFMTSLNWGKEAGRTTFITGDKRPNLFTGFELAGAEGRALELWDVDVKDLLETGRIVIERSALKEMIEDHQSDLVTRVAVQGLRQKGPNLGEVLVRAPRY.

Residues 113–158 are disordered; the sequence is ASTKTRYEVHGSHKKMSPQKGTGNARRGTRQSPLMKGGGKTFGPKP.

It belongs to the universal ribosomal protein uL4 family. In terms of assembly, component of the mitochondrial large ribosomal subunit (mt-LSU). Mature N.crassa 74S mitochondrial ribosomes consist of a small (37S) and a large (54S) subunit. The 37S small subunit contains a 16S ribosomal RNA (16S mt-rRNA) and 32 different proteins. The 54S large subunit contains a 23S rRNA (23S mt-rRNA) and 42 different proteins.

The protein resides in the mitochondrion. In terms of biological role, component of the mitochondrial ribosome (mitoribosome), a dedicated translation machinery responsible for the synthesis of mitochondrial genome-encoded proteins, including at least some of the essential transmembrane subunits of the mitochondrial respiratory chain. The mitoribosomes are attached to the mitochondrial inner membrane and translation products are cotranslationally integrated into the membrane. The protein is Large ribosomal subunit protein uL4m (yml6) of Neurospora crassa (strain ATCC 24698 / 74-OR23-1A / CBS 708.71 / DSM 1257 / FGSC 987).